We begin with the raw amino-acid sequence, 44 residues long: Thymosin beta-4 (44 aa).

Composition is skewed to basic and acidic residues over residues 1-25 (MSDKPDMAEIEKFDKAKLKKTETQE) and 33-44 (ETIEQEKQTSES). Residues 1-44 (MSDKPDMAEIEKFDKAKLKKTETQEKNPLPSKETIEQEKQTSES) form a disordered region. S2 is subject to N-acetylserine.

Belongs to the thymosin beta family. Spleen, kidney, heart, and oocytes.

The protein resides in the cytoplasm. Its subcellular location is the cytoskeleton. Functionally, plays an important role in the organization of the cytoskeleton. Binds to and sequesters actin monomers (G actin) and therefore inhibits actin polymerization. This Xenopus laevis (African clawed frog) protein is Thymosin beta-4 (tmsb4).